The sequence spans 600 residues: NADH-quinone oxidoreductase subunit C/D (600 aa).

Residues 1–190 are NADH dehydrogenase I subunit C; the sequence is MVNNMTDLTA…SPFELTKAKQ (190 aa). The segment at 214–600 is NADH dehydrogenase I subunit D; it reads DFMFLNLGPN…IDFVMSDVDR (387 aa).

It in the N-terminal section; belongs to the complex I 30 kDa subunit family. In the C-terminal section; belongs to the complex I 49 kDa subunit family. As to quaternary structure, NDH-1 is composed of 13 different subunits. Subunits NuoB, CD, E, F, and G constitute the peripheral sector of the complex.

Its subcellular location is the cell inner membrane. The catalysed reaction is a quinone + NADH + 5 H(+)(in) = a quinol + NAD(+) + 4 H(+)(out). In terms of biological role, NDH-1 shuttles electrons from NADH, via FMN and iron-sulfur (Fe-S) centers, to quinones in the respiratory chain. The immediate electron acceptor for the enzyme in this species is believed to be ubiquinone. Couples the redox reaction to proton translocation (for every two electrons transferred, four hydrogen ions are translocated across the cytoplasmic membrane), and thus conserves the redox energy in a proton gradient. This chain is NADH-quinone oxidoreductase subunit C/D, found in Escherichia coli (strain K12 / DH10B).